Consider the following 456-residue polypeptide: Protein trichome birefringence-like 25 (456 aa).

Residues 26–42 traverse the membrane as a helical; Signal-anchor for type II membrane protein segment; the sequence is QIFLKSVAFFLLIGLAY. The GDS motif signature appears at 172 to 174; the sequence is GDS. The DCXHWCLPGXXDXWN motif motif lies at 426-440; it reads DCLHWCLPGPIDSWN.

The protein belongs to the PC-esterase family. TBL subfamily.

The protein localises to the membrane. In terms of biological role, may be involved in the O-acetylation of mannan. May act as a bridging protein that binds pectin and other cell wall polysaccharides. Probably involved in maintaining esterification of pectins. The sequence is that of Protein trichome birefringence-like 25 (TBL25) from Arabidopsis thaliana (Mouse-ear cress).